Consider the following 669-residue polypeptide: Protein adenylyltransferase SelO, mitochondrial (669 aa).

The N-terminal 115 residues, 1 to 115, are a transit peptide targeting the mitochondrion; the sequence is MAVYRAALGA…LGLGAPPARE (115 aa). Residues Gly153, Gly155, Lys176, Asp188, Gly189, Arg246, and Arg253 each contribute to the ATP site. Asp338 acts as the Proton acceptor in catalysis. Positions 339 and 348 each coordinate Mg(2+). Asp348 provides a ligand contact to ATP. The segment at 634–654 is disordered; it reads ATDAEATEADGADGRQRSYSS. A Phosphothreonine modification is found at Thr635. Phosphoserine is present on Ser653. Position 667 (Sec667) is a non-standard amino acid, selenocysteine.

Belongs to the SELO family. Requires Mg(2+) as cofactor.

It localises to the mitochondrion. It carries out the reaction L-tyrosyl-[protein] + ATP = O-(5'-adenylyl)-L-tyrosyl-[protein] + diphosphate. The catalysed reaction is L-threonyl-[protein] + ATP = 3-O-(5'-adenylyl)-L-threonyl-[protein] + diphosphate. It catalyses the reaction L-seryl-[protein] + ATP = 3-O-(5'-adenylyl)-L-seryl-[protein] + diphosphate. Functionally, catalyzes the transfer of adenosine 5'-monophosphate (AMP) to Ser, Thr and Tyr residues of target proteins (AMPylation). May be a redox-active mitochondrial selenoprotein which interacts with a redox target protein. The chain is Protein adenylyltransferase SelO, mitochondrial from Homo sapiens (Human).